A 201-amino-acid chain; its full sequence is Ribosome maturation factor RimM (201 aa).

The PRC barrel domain maps to Glu94–Leu168. The interval Pro164–Ser201 is disordered. Over residues Gly180–Gly194 the composition is skewed to acidic residues.

It belongs to the RimM family. Binds ribosomal protein uS19.

The protein localises to the cytoplasm. Its function is as follows. An accessory protein needed during the final step in the assembly of 30S ribosomal subunit, possibly for assembly of the head region. Essential for efficient processing of 16S rRNA. May be needed both before and after RbfA during the maturation of 16S rRNA. It has affinity for free ribosomal 30S subunits but not for 70S ribosomes. In Rhodospirillum rubrum (strain ATCC 11170 / ATH 1.1.1 / DSM 467 / LMG 4362 / NCIMB 8255 / S1), this protein is Ribosome maturation factor RimM.